The chain runs to 392 residues: PMA1 stabilization in the Golgi protein 1 (392 aa).

The N-terminal stretch at 1–22 (MRFHDSILIFFSLASLYQHVHG) is a signal peptide. O-linked (Man) threonine glycosylation is found at T34 and T35. O-linked (Man) serine glycosylation occurs at S36. O-linked (Man) threonine glycosylation is present at T45. An O-linked (Man) serine glycan is attached at S49. T55, T57, and T63 each carry an O-linked (Man) threonine glycan. The O-linked (Man) serine glycan is linked to S65. Residue T71 is glycosylated (O-linked (Man) threonine). Residue S80 is glycosylated (O-linked (Man) serine). Residues T89 and T99 are each glycosylated (O-linked (Man) threonine). S107 carries O-linked (Man) serine glycosylation. O-linked (Man) threonine glycosylation is found at T108 and T112. S114 and S115 each carry an O-linked (Man) serine glycan. T117 carries an O-linked (Man) threonine glycan. 2 O-linked (Man) serine glycosylation sites follow: S119 and S148. T156 carries an O-linked (Man) threonine glycan. An O-linked (Man) serine glycan is attached at S171. O-linked (Man) threonine glycosylation occurs at T176. Residue S181 is glycosylated (O-linked (Man) serine). 4 O-linked (Man) threonine glycosylation sites follow: T188, T192, T195, and T199. O-linked (Man) serine glycosylation is found at S203 and S215. Residues 230 to 317 (DIPATFFSSE…DAGITNDQWY (88 aa)) lie on the Lumenal side of the membrane. The chain crosses the membrane as a helical span at residues 318–338 (YVALSIPTVVVVFFVFMYFFL). The Cytoplasmic portion of the chain corresponds to 339-392 (YVNGKNRDFTDVTRKALNKKRRVLGKFSEMKKFKNMKNHKYTELPSYKKTSKQN).

As to quaternary structure, interacts with EXP1. PSG1-N' interacts with ERAD-related proteins involved in PMA1 quality control including EPS1, CDC48, UBX2 and SSM4. PSG1-C' interacts with the TLG1/2 SNARE complex proteins TLG1, TLG2 and VTI1. In terms of processing, the precursor protein is cleaved into two polypeptide chains, PSG1-N' and PSG1-C'. The cleavage is performed in the Golgi apparatus by Ca(+)-dependent serine protease KEX2 between Arg-229 and Asp-230. Post-translationally, PSG1-N' is highly O-mannosylated.

It is found in the golgi apparatus lumen. It localises to the cytoplasmic vesicle. Its subcellular location is the COPI-coated vesicle membrane. With EXP1, the specific cargo receptor protein for the plasma membrane ATPase PMA1, is involved in the transport and/or maturation of PMA1. EXP1 and PSG1 probably act sequentially to promote PMA1 sorting between the ER and the Golgi, with EXP1 promoting PMA1 export from the ER to the Golgi while PSG1 has a role in PMA1 maturation or quality control in the Golgi. PSG1 might also couple PMA1 sorting and maturation in the early secretory pathway with the glycosylation machinery. Functionally, PSG1 is cleaved by KEX2 in two stable peptides, PSG1-N' and PSG1-C', the former supporting a role in maturation quality control, the latter having a role in modulating vesicular trafficking. The protein is PMA1 stabilization in the Golgi protein 1 of Saccharomyces cerevisiae (strain ATCC 204508 / S288c) (Baker's yeast).